Reading from the N-terminus, the 312-residue chain is DNA-directed RNA polymerase subunit alpha (312 aa).

The segment at 1-226 (MIEFEKPNIT…EHLDIFVNLT (226 aa)) is alpha N-terminal domain (alpha-NTD). Residues 243–312 (KEKMLEMTIE…DLGLGLRKED (70 aa)) are alpha C-terminal domain (alpha-CTD).

It belongs to the RNA polymerase alpha chain family. In terms of assembly, homodimer. The RNAP catalytic core consists of 2 alpha, 1 beta, 1 beta' and 1 omega subunit. When a sigma factor is associated with the core the holoenzyme is formed, which can initiate transcription.

The catalysed reaction is RNA(n) + a ribonucleoside 5'-triphosphate = RNA(n+1) + diphosphate. In terms of biological role, DNA-dependent RNA polymerase catalyzes the transcription of DNA into RNA using the four ribonucleoside triphosphates as substrates. This Lacticaseibacillus casei (strain BL23) (Lactobacillus casei) protein is DNA-directed RNA polymerase subunit alpha.